A 218-amino-acid polypeptide reads, in one-letter code: Probable nicotinate-nucleotide adenylyltransferase (218 aa).

Belongs to the NadD family.

The catalysed reaction is nicotinate beta-D-ribonucleotide + ATP + H(+) = deamido-NAD(+) + diphosphate. Its pathway is cofactor biosynthesis; NAD(+) biosynthesis; deamido-NAD(+) from nicotinate D-ribonucleotide: step 1/1. Its function is as follows. Catalyzes the reversible adenylation of nicotinate mononucleotide (NaMN) to nicotinic acid adenine dinucleotide (NaAD). The polypeptide is Probable nicotinate-nucleotide adenylyltransferase (Corynebacterium glutamicum (strain ATCC 13032 / DSM 20300 / JCM 1318 / BCRC 11384 / CCUG 27702 / LMG 3730 / NBRC 12168 / NCIMB 10025 / NRRL B-2784 / 534)).